Here is a 312-residue protein sequence, read N- to C-terminus: Ribosomal RNA small subunit methyltransferase H (312 aa).

S-adenosyl-L-methionine contacts are provided by residues Gly-36–His-38, Asp-55, Phe-81, Asp-103, and Gln-110.

Belongs to the methyltransferase superfamily. RsmH family.

It is found in the cytoplasm. The enzyme catalyses cytidine(1402) in 16S rRNA + S-adenosyl-L-methionine = N(4)-methylcytidine(1402) in 16S rRNA + S-adenosyl-L-homocysteine + H(+). Its function is as follows. Specifically methylates the N4 position of cytidine in position 1402 (C1402) of 16S rRNA. This Marinomonas sp. (strain MWYL1) protein is Ribosomal RNA small subunit methyltransferase H.